We begin with the raw amino-acid sequence, 872 residues long: DNA mismatch repair protein MutS (872 aa).

Residue 602 to 609 (GPNMSGKS) coordinates ATP.

Belongs to the DNA mismatch repair MutS family.

Its function is as follows. This protein is involved in the repair of mismatches in DNA. It is possible that it carries out the mismatch recognition step. This protein has a weak ATPase activity. This is DNA mismatch repair protein MutS from Staphylococcus aureus (strain bovine RF122 / ET3-1).